Reading from the N-terminus, the 783-residue chain is ATP-dependent 6-phosphofructokinase (783 aa).

A compositionally biased stretch (pro residues) spans M1–P10. The segment at M1–T20 is disordered. Residues M1–T389 are N-terminal catalytic PFK domain 1. ATP contacts are provided by residues G23, R86–C87, and G116–S119. D117 contacts Mg(2+). Residues S162 to D164, R199, M206 to R208, E263, R291, and H297 to R300 contribute to the substrate site. D164 (proton acceptor) is an active-site residue. The interval P390–M403 is interdomain linker. Positions R404 to A783 are C-terminal regulatory PFK domain 2. Beta-D-fructose 2,6-bisphosphate-binding positions include R480, T537–N541, R575, Q582–G584, E642, R668, H674–Q677, and R749.

The protein belongs to the phosphofructokinase type A (PFKA) family. ATP-dependent PFK group I subfamily. Eukaryotic two domain clade 'E' sub-subfamily. As to quaternary structure, homotetramer. Requires Mg(2+) as cofactor.

The protein resides in the cytoplasm. It carries out the reaction beta-D-fructose 6-phosphate + ATP = beta-D-fructose 1,6-bisphosphate + ADP + H(+). It functions in the pathway carbohydrate degradation; glycolysis; D-glyceraldehyde 3-phosphate and glycerone phosphate from D-glucose: step 3/4. Allosterically activated by ADP, AMP, or fructose 2,6-bisphosphate, and allosterically inhibited by ATP or citrate. Functionally, catalyzes the phosphorylation of D-fructose 6-phosphate to fructose 1,6-bisphosphate by ATP, the first committing step of glycolysis. The protein is ATP-dependent 6-phosphofructokinase (pfkA) of Aspergillus niger.